A 622-amino-acid polypeptide reads, in one-letter code: Probable methionine--tRNA ligase, mitochondrial (622 aa).

Positions 67–79 match the 'HIGH' region motif; that stretch reads PIFYVNASPHVGH. The short motif at 366-370 is the 'KMSKS' region element; that stretch reads KMSKS. Position 369 (K369) interacts with ATP. The tract at residues 592–622 is disordered; that stretch reads LDDIKGMGPDAGSKKHSSGNKPSSGNKKPTA. Residues 610 to 622 show a composition bias toward low complexity; it reads GNKPSSGNKKPTA.

This sequence belongs to the class-I aminoacyl-tRNA synthetase family.

The protein localises to the mitochondrion matrix. It carries out the reaction tRNA(Met) + L-methionine + ATP = L-methionyl-tRNA(Met) + AMP + diphosphate. This is Probable methionine--tRNA ligase, mitochondrial from Neurospora crassa (strain ATCC 24698 / 74-OR23-1A / CBS 708.71 / DSM 1257 / FGSC 987).